The sequence spans 188 residues: ATP synthase subunit b (188 aa).

A helical transmembrane segment spans residues 24 to 44 (LPASYDIVWSLVVFIIVLILF).

It belongs to the ATPase B chain family. As to quaternary structure, F-type ATPases have 2 components, F(1) - the catalytic core - and F(0) - the membrane proton channel. F(1) has five subunits: alpha(3), beta(3), gamma(1), delta(1), epsilon(1). F(0) has three main subunits: a(1), b(2) and c(10-14). The alpha and beta chains form an alternating ring which encloses part of the gamma chain. F(1) is attached to F(0) by a central stalk formed by the gamma and epsilon chains, while a peripheral stalk is formed by the delta and b chains.

The protein resides in the cell membrane. Its function is as follows. F(1)F(0) ATP synthase produces ATP from ADP in the presence of a proton or sodium gradient. F-type ATPases consist of two structural domains, F(1) containing the extramembraneous catalytic core and F(0) containing the membrane proton channel, linked together by a central stalk and a peripheral stalk. During catalysis, ATP synthesis in the catalytic domain of F(1) is coupled via a rotary mechanism of the central stalk subunits to proton translocation. Functionally, component of the F(0) channel, it forms part of the peripheral stalk, linking F(1) to F(0). The sequence is that of ATP synthase subunit b from Corynebacterium diphtheriae (strain ATCC 700971 / NCTC 13129 / Biotype gravis).